Reading from the N-terminus, the 187-residue chain is ATP synthase subunit b, chloroplastic (187 aa).

The chain crosses the membrane as a helical span at residues 29–49 (LAVVLGVLIYLGKGVCAGCIL).

It belongs to the ATPase B chain family. In terms of assembly, F-type ATPases have 2 components, F(1) - the catalytic core - and F(0) - the membrane proton channel. F(1) has five subunits: alpha(3), beta(3), gamma(1), delta(1), epsilon(1). F(0) has four main subunits: a(1), b(1), b'(1) and c(10-14). The alpha and beta chains form an alternating ring which encloses part of the gamma chain. F(1) is attached to F(0) by a central stalk formed by the gamma and epsilon chains, while a peripheral stalk is formed by the delta, b and b' chains.

The protein localises to the plastid. The protein resides in the chloroplast thylakoid membrane. F(1)F(0) ATP synthase produces ATP from ADP in the presence of a proton or sodium gradient. F-type ATPases consist of two structural domains, F(1) containing the extramembraneous catalytic core and F(0) containing the membrane proton channel, linked together by a central stalk and a peripheral stalk. During catalysis, ATP synthesis in the catalytic domain of F(1) is coupled via a rotary mechanism of the central stalk subunits to proton translocation. In terms of biological role, component of the F(0) channel, it forms part of the peripheral stalk, linking F(1) to F(0). The sequence is that of ATP synthase subunit b, chloroplastic from Angiopteris evecta (Mule's foot fern).